Reading from the N-terminus, the 357-residue chain is Peptide chain release factor 1 (357 aa).

Position 236 is an N5-methylglutamine (glutamine 236).

It belongs to the prokaryotic/mitochondrial release factor family. Methylated by PrmC. Methylation increases the termination efficiency of RF1.

The protein resides in the cytoplasm. Peptide chain release factor 1 directs the termination of translation in response to the peptide chain termination codons UAG and UAA. This chain is Peptide chain release factor 1, found in Mycolicibacterium gilvum (strain PYR-GCK) (Mycobacterium gilvum (strain PYR-GCK)).